Here is a 138-residue protein sequence, read N- to C-terminus: Small ribosomal subunit protein uS11c (138 aa).

It belongs to the universal ribosomal protein uS11 family. In terms of assembly, part of the 30S ribosomal subunit.

The protein resides in the plastid. It localises to the chloroplast. In Acorus calamus (Sweet flag), this protein is Small ribosomal subunit protein uS11c.